Reading from the N-terminus, the 182-residue chain is Adenine phosphoribosyltransferase (182 aa).

Belongs to the purine/pyrimidine phosphoribosyltransferase family. In terms of assembly, homodimer.

Its subcellular location is the cytoplasm. The enzyme catalyses AMP + diphosphate = 5-phospho-alpha-D-ribose 1-diphosphate + adenine. It functions in the pathway purine metabolism; AMP biosynthesis via salvage pathway; AMP from adenine: step 1/1. Its function is as follows. Catalyzes a salvage reaction resulting in the formation of AMP, that is energically less costly than de novo synthesis. In Pseudomonas syringae pv. tomato (strain ATCC BAA-871 / DC3000), this protein is Adenine phosphoribosyltransferase.